The sequence spans 309 residues: Assembly-complementing factor 4 (309 aa).

Disordered regions lie at residues 1–80 (MSED…ASPI), 164–240 (KSIN…ENTP), and 286–309 (VRSEDEDDEEFEPMGDIPVHLFKR). Composition is skewed to basic and acidic residues over residues 13–24 (ELHKLSIVDKHS) and 34–44 (KQHEVQPESKS). Phosphoserine is present on residues serine 44, serine 71, serine 74, serine 78, and serine 165. Residues 61–80 (SSPQRSTTNQSPVSDHASPI) are compositionally biased toward polar residues. Composition is skewed to low complexity over residues 174–188 (NNNVNSNINNTLPNR), 205–214 (PSRSSESTPT), and 222–239 (PRNTMKNANTTATAGENT). Over residues 287–298 (RSEDEDDEEFEP) the composition is skewed to acidic residues. Position 288 is a phosphoserine (serine 288).

Functionally, may be involved in actin cytoskeleton organization and biogenesis. This chain is Assembly-complementing factor 4 (ACF4), found in Saccharomyces cerevisiae (strain ATCC 204508 / S288c) (Baker's yeast).